A 1275-amino-acid chain; its full sequence is Rho1 guanine nucleotide exchange factor 3 (1275 aa).

Disordered stretches follow at residues 1–42, 56–113, 131–188, and 214–248; these read MKLS…SFQK, SPPF…NSAA, NNPL…SPYS, and LSPTRSPARTPSPIRLYSSDALRPQSPLSPSVEYL. Residues 7 to 17 show a composition bias toward basic and acidic residues; sequence LFHRSSKDHGG. Composition is skewed to polar residues over residues 32-42, 80-113, and 142-151; these read PHSSSPPSFQK, ASINSRRVASYTVQSSPSRTTYRQLPNEPQNSAA, and SPGNKQNTVD. 2 stretches are compositionally biased toward low complexity: residues 178-188 and 214-228; these read SSVSSHSSPYS and LSPTRSPARTPSPIR. Ser293 carries the post-translational modification Phosphoserine. Residues 465-657 form the DH domain; that stretch reads ARQNNIHELI…RATCEECDAV (193 aa). Residues 692–855 form the PH domain; it reads EFFFEGIVQR…WVEKINVAKK (164 aa). In terms of domain architecture, CNH spans 930–1239; sequence YGDISCIAQF…KYYPSNSDWL (310 aa).

It is found in the cytoplasm. Stimulates the exchange of Rho1 GDP-bound form into GTP-bound form. Regulates, via interaction and activation of Rho1, beta-1,3-glucan biosynthesis and cell wall integrity during septation. Involved in the regulation of contractile ring assembly. This is Rho1 guanine nucleotide exchange factor 3 (rgf3) from Schizosaccharomyces pombe (strain 972 / ATCC 24843) (Fission yeast).